The following is a 148-amino-acid chain: Large ribosomal subunit protein bL9 (148 aa).

Part of the 50S ribosomal subunit.

Its function is as follows. Binds to the 23S rRNA. Extends more that 50 Angstroms beyond the surface of the 70S ribosome. The polypeptide is Large ribosomal subunit protein bL9 (rplI) (Thermus thermophilus (strain ATCC 27634 / DSM 579 / HB8)).